The following is a 261-amino-acid chain: Enolase-phosphatase E1 (261 aa).

Mg(2+) contacts are provided by D16 and E18. Residues 153–154 and K187 contribute to the substrate site; that span reads SS. D212 contacts Mg(2+).

Belongs to the HAD-like hydrolase superfamily. MasA/MtnC family. As to quaternary structure, monomer. Requires Mg(2+) as cofactor.

The protein resides in the cytoplasm. Its subcellular location is the nucleus. It catalyses the reaction 5-methylsulfanyl-2,3-dioxopentyl phosphate + H2O = 1,2-dihydroxy-5-(methylsulfanyl)pent-1-en-3-one + phosphate. Its pathway is amino-acid biosynthesis; L-methionine biosynthesis via salvage pathway; L-methionine from S-methyl-5-thio-alpha-D-ribose 1-phosphate: step 3/6. It functions in the pathway amino-acid biosynthesis; L-methionine biosynthesis via salvage pathway; L-methionine from S-methyl-5-thio-alpha-D-ribose 1-phosphate: step 4/6. Functionally, bifunctional enzyme that catalyzes the enolization of 2,3-diketo-5-methylthiopentyl-1-phosphate (DK-MTP-1-P) into the intermediate 2-hydroxy-3-keto-5-methylthiopentenyl-1-phosphate (HK-MTPenyl-1-P), which is then dephosphorylated to form the acireductone 1,2-dihydroxy-3-keto-5-methylthiopentene (DHK-MTPene). This is Enolase-phosphatase E1 from Bos taurus (Bovine).